The following is a 158-amino-acid chain: uncharacterized protein (158 aa).

Positions 1–30 (MNKKFLKCGTLFLISCSILGSTIPAVTVFS) are cleaved as a signal peptide.

This is an uncharacterized protein from Streptococcus pneumoniae serotype 2 (strain D39 / NCTC 7466).